Here is a 65-residue protein sequence, read N- to C-terminus: Large ribosomal subunit protein bL31 (65 aa).

Zn(2+)-binding residues include Cys-16, Cys-18, Cys-36, and Cys-39.

This sequence belongs to the bacterial ribosomal protein bL31 family. Type A subfamily. Part of the 50S ribosomal subunit. It depends on Zn(2+) as a cofactor.

Binds the 23S rRNA. The chain is Large ribosomal subunit protein bL31 from Geotalea daltonii (strain DSM 22248 / JCM 15807 / FRC-32) (Geobacter daltonii).